The sequence spans 83 residues: Short neurotoxin OKI-01/OKI-19 (83 aa).

Residues 1-21 (MKTLLLTLVVVTIVCLDLGYT) form the signal peptide. 4 disulfides stabilise this stretch: C24/C45, C38/C62, C64/C75, and C76/C81.

It belongs to the three-finger toxin family. Short-chain subfamily. Type I alpha-neurotoxin sub-subfamily. In terms of tissue distribution, expressed by the venom gland.

The protein localises to the secreted. Binds to muscle nicotinic acetylcholine receptor (nAChR) and inhibit acetylcholine from binding to the receptor, thereby impairing neuromuscular transmission. The chain is Short neurotoxin OKI-01/OKI-19 from Laticauda laticaudata (Blue-ringed sea krait).